Here is a 147-residue protein sequence, read N- to C-terminus: Histone H3.X (147 aa).

The span at 1-16 shows a compositional bias: low complexity; the sequence is MARTKQTARKATAWQA. The interval 1 to 43 is disordered; the sequence is MARTKQTARKATAWQAPRKPLATKAARKRASPTGGIKKPHRYK. The residue at position 3 (arginine 3) is an Asymmetric dimethylarginine. Arginine 3 carries the citrulline; alternate modification. Threonine 4 is subject to Phosphothreonine. At lysine 5 the chain carries Allysine; alternate. N6,N6,N6-trimethyllysine; alternate is present on lysine 5. Lysine 5 is modified (N6,N6-dimethyllysine; alternate). Lysine 5 bears the N6-(2-hydroxyisobutyryl)lysine; alternate mark. Lysine 5 is subject to N6-(beta-hydroxybutyryl)lysine; alternate. N6-acetyllysine; alternate is present on lysine 5. At lysine 5 the chain carries N6-crotonyllysine; alternate. Lysine 5 bears the N6-methyllysine; alternate mark. Residue glutamine 6 is modified to 5-glutamyl dopamine; alternate. Glutamine 6 carries the 5-glutamyl serotonin; alternate modification. Threonine 7 carries the post-translational modification Phosphothreonine. Arginine 9 is modified (citrulline; alternate). At arginine 9 the chain carries Symmetric dimethylarginine. N6,N6,N6-trimethyllysine; alternate is present on lysine 10. N6,N6-dimethyllysine; alternate is present on lysine 10. Residue lysine 10 is modified to N6-(2-hydroxyisobutyryl)lysine; alternate. The residue at position 10 (lysine 10) is an N6-(beta-hydroxybutyryl)lysine; alternate. Position 10 is an N6-acetyllysine; alternate (lysine 10). Lysine 10 carries the N6-crotonyllysine; alternate modification. Lysine 10 is modified (N6-methyllysine; alternate). Lysine 10 bears the N6-butyryllysine; alternate mark. N6-lactoyllysine; alternate is present on lysine 10. Threonine 12 carries the phosphothreonine modification. Residue arginine 18 is modified to Asymmetric dimethylarginine. Residue arginine 18 is modified to Citrulline; alternate. An N6-(2-hydroxyisobutyryl)lysine; alternate mark is found at lysine 19 and lysine 24. Lysine 19 and lysine 24 each carry N6-(beta-hydroxybutyryl)lysine; alternate. N6-acetyllysine; alternate occurs at positions 19 and 24. Lysine 19 and lysine 24 each carry N6-crotonyllysine; alternate. N6-methyllysine; alternate occurs at positions 19 and 24. N6-butyryllysine; alternate is present on residues lysine 19 and lysine 24. 2 positions are modified to N6-lactoyllysine; alternate: lysine 19 and lysine 24. Residues lysine 19 and lysine 24 each carry the N6-glutaryllysine; alternate modification. Position 27 is a citrulline (arginine 27). N6,N6,N6-trimethyllysine; alternate is present on residues lysine 28 and lysine 37. N6,N6-dimethyllysine; alternate is present on residues lysine 28 and lysine 37. N6-(2-hydroxyisobutyryl)lysine; alternate is present on residues lysine 28 and lysine 37. An N6-(beta-hydroxybutyryl)lysine; alternate modification is found at lysine 28. N6-acetyllysine; alternate is present on residues lysine 28 and lysine 37. The residue at position 28 (lysine 28) is an N6-crotonyllysine; alternate. An N6-methyllysine; alternate mark is found at lysine 28 and lysine 37. Position 28 is an N6-lactoyllysine; alternate (lysine 28). Lysine 28 is subject to N6-glutaryllysine; alternate. Lysine 38 bears the N6-methyllysine mark. A Phosphotyrosine modification is found at tyrosine 42. Lysine 57 is modified (N6,N6,N6-trimethyllysine; alternate). Position 57 is an N6-(2-hydroxyisobutyryl)lysine; alternate (lysine 57). Position 57 is an N6-(beta-hydroxybutyryl)lysine; alternate (lysine 57). Lysine 57 is modified (N6-acetyllysine; alternate). Lysine 57 carries the post-translational modification N6-crotonyllysine; alternate. Position 57 is an N6-lactoyllysine; alternate (lysine 57). Lysine 57 is subject to N6-glutaryllysine; alternate. An N6-methyllysine modification is found at lysine 57. Residue lysine 57 is modified to N6-succinyllysine; alternate. Serine 58 bears the Phosphoserine mark. N6-(2-hydroxyisobutyryl)lysine; alternate is present on lysine 65. Position 65 is an N6-methyllysine; alternate (lysine 65). The residue at position 87 (serine 87) is a Phosphoserine. Phosphothreonine is present on threonine 108.

Belongs to the histone H3 family. As to quaternary structure, the nucleosome is a histone octamer containing two molecules each of H2A, H2B, H3 and H4 assembled in one H3-H4 heterotetramer and two H2A-H2B heterodimers. The octamer wraps approximately 147 bp of DNA. Post-translationally, acetylation is generally linked to gene activation. Acetylation on Lys-10 (H3K9ac) impairs methylation at Arg-9 (H3R8me2s). Acetylation on Lys-19 (H3K18ac) and Lys-24 (H3K24ac) favors methylation at Arg-18 (H3R17me). Citrullination at Arg-9 (H3R8ci) and/or Arg-18 (H3R17ci) impairs methylation and represses transcription. In terms of processing, asymmetric dimethylation at Arg-18 (H3R17me2a) is linked to gene activation. Symmetric dimethylation at Arg-9 (H3R8me2s) is linked to gene repression. Asymmetric dimethylation at Arg-3 (H3R2me2a) is linked to gene repression and is mutually exclusive with H3 Lys-5 methylation (H3K4me2 and H3K4me3). H3R2me2a is present at the 3' of genes regardless of their transcription state and is enriched on inactive promoters, while it is absent on active promoters. Post-translationally, methylation at Lys-5 (H3K4me) facilitates subsequent acetylation of H3 and H4. Methylation at Lys-10 (H3K9me) and Lys-28 (H3K27me), which are linked to gene repression, are underrepresented. Methylation at Lys-10 (H3K9me) is a specific target for HP1 proteins (CBX1, CBX3 and CBX5) and prevents subsequent acetylation of H3 and H4. Phosphorylation at Thr-7 (H3T6ph) is a specific tag for epigenetic transcriptional activation that prevents demethylation of Lys-5 (H3K4me) by LSD1/KDM1A. At centromeres, specifically phosphorylated at Thr-12 (H3T11ph) from prophase to early anaphase. Phosphorylation at Thr-12 (H3T11ph) is a specific tag for epigenetic transcriptional activation that promotes demethylation of Lys-10 (H3K9me). Phosphorylation at Tyr-42 (H3Y41ph) promotes exclusion of CBX5 (HP1 alpha) from chromatin. In terms of processing, lysine deamination at Lys-5 (H3K4all) to form allysine. Allysine formation only takes place on H3K4me3 and results in gene repression. Post-translationally, crotonylation (Kcr) is specifically present in male germ cells and marks testis-specific genes in post-meiotic cells, including X-linked genes that escape sex chromosome inactivation in haploid cells. Crotonylation marks active promoters and enhancers and confers resistance to transcriptional repressors. It is also associated with post-meiotically activated genes on autosomes. Butyrylation of histones marks active promoters and competes with histone acetylation. It is present during late spermatogenesis. As to expression, expressed at low level in some tissues, such as testis and brain.

The protein localises to the nucleus. It localises to the chromosome. In terms of biological role, primate-specific variant histone H3, which constitutes a core component of nucleosomes. Nucleosomes wrap and compact DNA into chromatin, limiting DNA accessibility to the cellular machineries which require DNA as a template. Histones thereby play a central role in transcription regulation, DNA repair, DNA replication and chromosomal stability. DNA accessibility is regulated via a complex set of post-translational modifications of histones, also called histone code, and nucleosome remodeling. This Homo sapiens (Human) protein is Histone H3.X.